Here is a 580-residue protein sequence, read N- to C-terminus: DNA mismatch repair protein MutL (580 aa).

Belongs to the DNA mismatch repair MutL/HexB family.

Functionally, this protein is involved in the repair of mismatches in DNA. It is required for dam-dependent methyl-directed DNA mismatch repair. May act as a 'molecular matchmaker', a protein that promotes the formation of a stable complex between two or more DNA-binding proteins in an ATP-dependent manner without itself being part of a final effector complex. The polypeptide is DNA mismatch repair protein MutL (Chlamydia felis (strain Fe/C-56) (Chlamydophila felis)).